A 61-amino-acid polypeptide reads, in one-letter code: Insect toxin LqhIT5 (61 aa).

The LCN-type CS-alpha/beta domain occupies 1-61 (DGYIRGGDGC…EWKYETNTCG (61 aa)). Intrachain disulfides connect Cys-10/Cys-60, Cys-14/Cys-35, Cys-21/Cys-42, and Cys-25/Cys-44.

This sequence belongs to the long (4 C-C) scorpion toxin superfamily. Sodium channel inhibitor family. Beta subfamily. As to expression, expressed by the venom gland.

The protein localises to the secreted. Functionally, excitatory insect beta-toxins induce a spastic paralysis. They bind voltage-independently at site-4 of sodium channels (Nav) and shift the voltage of activation toward more negative potentials thereby affecting sodium channel activation and promoting spontaneous and repetitive firing. This toxin is active only on insects. It operates by inducing a fast contraction paralysis without depressant activity. It is more similar to the excitatory toxins in its mode of action and the depressant toxins in its primary structure. In Leiurus hebraeus (Hebrew deathstalker scorpion), this protein is Insect toxin LqhIT5.